We begin with the raw amino-acid sequence, 214 residues long: Pyridoxine/pyridoxamine 5'-phosphate oxidase (214 aa).

Residues 8–11 (RTNY) and Lys-66 each bind substrate. Residues 61–66 (RIVLIK), 76–77 (FT), Arg-82, Lys-83, and Gln-105 contribute to the FMN site. 3 residues coordinate substrate: Tyr-123, Arg-127, and Ser-131. FMN is bound by residues 140-141 (QS) and Trp-184. 190–192 (RLH) serves as a coordination point for substrate. Residue Arg-194 participates in FMN binding.

The protein belongs to the pyridoxamine 5'-phosphate oxidase family. In terms of assembly, homodimer. FMN is required as a cofactor.

The catalysed reaction is pyridoxamine 5'-phosphate + O2 + H2O = pyridoxal 5'-phosphate + H2O2 + NH4(+). It carries out the reaction pyridoxine 5'-phosphate + O2 = pyridoxal 5'-phosphate + H2O2. It functions in the pathway cofactor metabolism; pyridoxal 5'-phosphate salvage; pyridoxal 5'-phosphate from pyridoxamine 5'-phosphate: step 1/1. It participates in cofactor metabolism; pyridoxal 5'-phosphate salvage; pyridoxal 5'-phosphate from pyridoxine 5'-phosphate: step 1/1. Catalyzes the oxidation of either pyridoxine 5'-phosphate (PNP) or pyridoxamine 5'-phosphate (PMP) into pyridoxal 5'-phosphate (PLP). The chain is Pyridoxine/pyridoxamine 5'-phosphate oxidase from Burkholderia pseudomallei (strain 1106a).